A 170-amino-acid polypeptide reads, in one-letter code: Adenine phosphoribosyltransferase (170 aa).

Belongs to the purine/pyrimidine phosphoribosyltransferase family. In terms of assembly, homodimer.

It is found in the cytoplasm. It catalyses the reaction AMP + diphosphate = 5-phospho-alpha-D-ribose 1-diphosphate + adenine. The protein operates within purine metabolism; AMP biosynthesis via salvage pathway; AMP from adenine: step 1/1. In terms of biological role, catalyzes a salvage reaction resulting in the formation of AMP, that is energically less costly than de novo synthesis. This is Adenine phosphoribosyltransferase from Brachyspira hyodysenteriae (strain ATCC 49526 / WA1).